Consider the following 203-residue polypeptide: Chaperonin-like RbcX protein 2, chloroplastic (203 aa).

Residues 1 to 78 (MVSAWFVVGS…RKSKKLLIVN (78 aa)) constitute a chloroplast transit peptide.

The protein belongs to the RbcX family. In terms of assembly, homodimer. Interacts with rbcL, atpB and RBCS-1B.

It is found in the plastid. The protein localises to the chloroplast stroma. Functionally, chaperone involved in RuBisCO assembly process. The chain is Chaperonin-like RbcX protein 2, chloroplastic from Arabidopsis thaliana (Mouse-ear cress).